Reading from the N-terminus, the 285-residue chain is Bifunctional protein FolD (285 aa).

NADP(+) is bound by residues 165–167 (GRS) and S190.

Belongs to the tetrahydrofolate dehydrogenase/cyclohydrolase family. Homodimer.

It carries out the reaction (6R)-5,10-methylene-5,6,7,8-tetrahydrofolate + NADP(+) = (6R)-5,10-methenyltetrahydrofolate + NADPH. The catalysed reaction is (6R)-5,10-methenyltetrahydrofolate + H2O = (6R)-10-formyltetrahydrofolate + H(+). It participates in one-carbon metabolism; tetrahydrofolate interconversion. In terms of biological role, catalyzes the oxidation of 5,10-methylenetetrahydrofolate to 5,10-methenyltetrahydrofolate and then the hydrolysis of 5,10-methenyltetrahydrofolate to 10-formyltetrahydrofolate. The sequence is that of Bifunctional protein FolD from Burkholderia cenocepacia (strain HI2424).